Reading from the N-terminus, the 255-residue chain is Enkurin (255 aa).

The segment covering 1-10 has biased composition (polar residues); sequence MDSPCTSESI. Disordered stretches follow at residues 1–25 and 67–96; these read MDSPCTSESIYNLIPSDLKEPPQHP and SKEKTLPPKKKFNRCSPKKPAVPLRTDHPV. Over residues 73-83 the composition is skewed to basic residues; the sequence is PPKKKFNRCSP. The SH3-binding signature appears at 83 to 89; it reads PKKPAVP. The 93-residue stretch at 160 to 252 folds into the Enkurin domain; that stretch reads KRNEDVKKAQ…VIEKHKIIYI (93 aa). The tract at residues 160–255 is interaction with TRPC proteins; sequence KRNEDVKKAQ…KHKIIYIANK (96 aa). The region spanning 176–187 is the IQ domain; that stretch reads IQENLKKAAMKR.

As to quaternary structure, microtubule inner protein component of sperm flagellar doublet microtubules. Binds calmodulin via its IQ domain. Interacts with TRPC1, TRPC2, TRPC5, but not TRPC3. Interacts with CFAP45. As to expression, high expression in testis and vomeronasal organ and lower expression in ovary, heart, lung, and brain. Not expressed in other tissues.

Its subcellular location is the cytoplasm. The protein localises to the cytoskeleton. The protein resides in the cilium axoneme. It is found in the flagellum axoneme. Functionally, adapter that functions to localize a calcium-sensitive signal transduction machinery in sperm to a calcium-permeable ion channel. Microtubule inner protein (MIP) part of the dynein-decorated doublet microtubules (DMTs) in cilia axoneme, which is required for motile cilia beating. The protein is Enkurin (Enkur) of Mus musculus (Mouse).